The primary structure comprises 364 residues: MIRIFALITALAITVKCQDDRRPFYVIGHMVNSIPQVSQFLELGTNAIESDVEFSENGTALRTFHGLPCDCLRRCKESADIVDYFQYIRNVTGFRHSEYSEKLLLVFLDLKVSKLPPESKYAAGVDIATKLVLHLWDGVPFYDAMNVLLSIGRASDMAVLTGAIDTIIGFDPSLSLFNHVGFDVGLNDKLENIAKMYERLGVNGHRWQGDGITNCLVNLRSPLRLKETISYRDTNKRESYVDKVYYWTVDKVATIRKTIRRGVDAIITNRPKRVTGVLEEDEFKKTVRPATYRDDPWMRLQSKTTGRGNELDSDMDEMGDEASEFDFEPFSYPLSPRRPLSSRSPAIRDSYNVWPQYNPLSPFY.

A signal peptide spans Met-1–Cys-17. The active-site Nucleophile is His-29. Residues Glu-49 and Asp-51 each coordinate Mg(2+). Residue His-65 is part of the active site. Cystine bridges form between Cys-69-Cys-75 and Cys-71-Cys-215. Asp-109 is a binding site for Mg(2+).

It belongs to the arthropod phospholipase D family. The cofactor is Mg(2+). In terms of tissue distribution, expressed in salivary glands.

It is found in the secreted. It catalyses the reaction an N-(acyl)-sphingosylphosphocholine = an N-(acyl)-sphingosyl-1,3-cyclic phosphate + choline. It carries out the reaction an N-(acyl)-sphingosylphosphoethanolamine = an N-(acyl)-sphingosyl-1,3-cyclic phosphate + ethanolamine. The enzyme catalyses a 1-acyl-sn-glycero-3-phosphocholine = a 1-acyl-sn-glycero-2,3-cyclic phosphate + choline. The catalysed reaction is a 1-acyl-sn-glycero-3-phosphoethanolamine = a 1-acyl-sn-glycero-2,3-cyclic phosphate + ethanolamine. Functionally, dermonecrotic toxins cleave the phosphodiester linkage between the phosphate and headgroup of certain phospholipids (sphingolipid and lysolipid substrates), forming an alcohol (often choline) and a cyclic phosphate. Acts on sphingomyelin (SM). It may also act on ceramide phosphoethanolamine (CPE), lysophosphatidylcholine (LPC) and lysophosphatidylethanolamine (LPE), but not on lysophosphatidylserine (LPS), and lysophosphatidylglycerol (LPG). It acts by transphosphatidylation, releasing exclusively cyclic phosphate products as second products. Induces dermonecrosis, hemolysis, increased vascular permeability, edema, inflammatory response, and platelet aggregation. The chain is Dermonecrotic toxin SPH (SPH) from Ixodes scapularis (Black-legged tick).